The primary structure comprises 308 residues: MDDFLSISLLSVAMLVGCYVAGIIPLAVNFSEERLKLVTVLGAGLLCGTALAVIVPEGVHALYEEVLEGKHHQTSEMKQNGIASDKAAEISSVHEHEHSHDHTQLHAYIGVSLVLGFVFMLLVDQIGSSHVHSSDDPETARPSSSKITTTLGLVVHAAADGVALGAAASTSQTSVQLIVFVAIMLHKAPAAFGLVSFLMHAGLERNRIRKHLLVFALAAPAMSMLTYLGLSKSSKEALSEVNATGVAMLFSAGTFLYVATVHVLPEVGGMGHSHKPDTTGGRGLSRLEVAALVLGCLIPLILSIGHQH.

The helical transmembrane segment at 4–24 threads the bilayer; sequence FLSISLLSVAMLVGCYVAGII. N-linked (GlcNAc...) asparagine glycosylation occurs at Asn-29. A run of 5 helical transmembrane segments spans residues 35 to 55, 107 to 127, 147 to 167, 177 to 197, and 211 to 231; these read LKLV…AVIV, AYIG…DQIG, ITTT…LGAA, LIVF…LVSF, and HLLV…LGLS. Asn-242 carries an N-linked (GlcNAc...) asparagine glycan. The next 2 membrane-spanning stretches (helical) occupy residues 245-265 and 287-307; these read GVAM…HVLP and LEVA…IGHQ.

Belongs to the ZIP transporter (TC 2.A.5) family.

It localises to the golgi apparatus. The protein resides in the trans-Golgi network membrane. It is found in the cell membrane. The protein localises to the cytoplasm. Its subcellular location is the perinuclear region. It localises to the mitochondrion. The protein resides in the nucleus. It catalyses the reaction Zn(2+)(in) = Zn(2+)(out). Its function is as follows. Transports zinc ions across cell and organelle membranes into the cytoplasm and regulates intracellular zinc homeostasis. Participates in the zinc ions efflux out of the secretory compartments. Regulates intracellular zinc level, resulting in the enhancement of AKT1 and MAPK3/MAPK1 (Erk1/2) phosphorylation in response to the BCR activation. Also functions as a membrane androgen receptor that mediates, through a G protein, the non-classical androgen signaling pathway, characterized by the activation of MAPK3/MAPK1 (Erk1/2) and transcription factors CREB1 or ATF1. This pathway contributes to CLDN1 and CLDN5 expression and tight junction formation between adjacent Sertoli cells. Mediates androgen-induced vascular endothelial cell proliferation through activation of an inhibitory G protein leading to the AKT1 and MAPK3/MAPK1 (Erk1/2) activation which in turn modulate inhibition (phosphorylation) of GSK3B and CCND1 transcription. Moreover, has dual functions as a membrane-bound androgen receptor and as an androgen-dependent zinc transporter both of which are mediated through an inhibitory G protein (Gi) that mediates both MAP kinase and zinc signaling leading to the androgen-dependent apoptotic process. The chain is Zinc transporter ZIP9 from Mus musculus (Mouse).